A 368-amino-acid chain; its full sequence is Probable dual-specificity RNA methyltransferase RlmN (368 aa).

Catalysis depends on glutamate 111, which acts as the Proton acceptor. Residues 117 to 355 (YPNRATLCIS…CTVRDTRGQE (239 aa)) enclose the Radical SAM core domain. Residues cysteine 124 and cysteine 360 are joined by a disulfide bond. Residues cysteine 131, cysteine 135, and cysteine 138 each coordinate [4Fe-4S] cluster. Residues 181–182 (GE), serine 215, 238–240 (SLH), and asparagine 317 each bind S-adenosyl-L-methionine. Cysteine 360 acts as the S-methylcysteine intermediate in catalysis.

It belongs to the radical SAM superfamily. RlmN family. [4Fe-4S] cluster serves as cofactor.

The protein resides in the cytoplasm. The enzyme catalyses adenosine(2503) in 23S rRNA + 2 reduced [2Fe-2S]-[ferredoxin] + 2 S-adenosyl-L-methionine = 2-methyladenosine(2503) in 23S rRNA + 5'-deoxyadenosine + L-methionine + 2 oxidized [2Fe-2S]-[ferredoxin] + S-adenosyl-L-homocysteine. The catalysed reaction is adenosine(37) in tRNA + 2 reduced [2Fe-2S]-[ferredoxin] + 2 S-adenosyl-L-methionine = 2-methyladenosine(37) in tRNA + 5'-deoxyadenosine + L-methionine + 2 oxidized [2Fe-2S]-[ferredoxin] + S-adenosyl-L-homocysteine. Specifically methylates position 2 of adenine 2503 in 23S rRNA and position 2 of adenine 37 in tRNAs. The polypeptide is Probable dual-specificity RNA methyltransferase RlmN (Corynebacterium diphtheriae (strain ATCC 700971 / NCTC 13129 / Biotype gravis)).